A 341-amino-acid polypeptide reads, in one-letter code: THO complex subunit 6 homolog (341 aa).

7 WD repeats span residues 22–61 (RLHM…SSEA), 74–112 (AHDG…GCKE), 124–163 (LEVP…FTRA), 166–205 (GHTD…EVQT), 215–254 (SRPH…PTTV), 256–293 (PIRA…KAQV), and 295–339 (GSSP…AFSL). Residue Ser-180 is modified to Phosphoserine.

The protein belongs to the WD repeat THOC6 family. Component of the THO subcomplex, which is composed of THOC1, THOC2, THOC3, THOC5, THOC6 and THOC7. The THO subcomplex interacts with DDX39B to form the THO-DDX39B complex which multimerizes into a 28-subunit tetrameric assembly. Component of the transcription/export (TREX) complex at least composed of ALYREF/THOC4, DDX39B, SARNP/CIP29, CHTOP and the THO subcomplex; in the complex interacts with THOC5; together with THOC5 and THOC7, plays a key structural role in the oligomerization of the THO-DDX39B complex. TREX seems to have a dynamic structure involving ATP-dependent remodeling.

The protein localises to the nucleus. Its subcellular location is the nucleus speckle. In terms of biological role, component of the THO subcomplex of the TREX complex which is thought to couple mRNA transcription, processing and nuclear export, and which specifically associates with spliced mRNA and not with unspliced pre-mRNA. Plays a key structural role in the oligomerization of the THO-DDX39B complex. TREX is recruited to spliced mRNAs by a transcription-independent mechanism, binds to mRNA upstream of the exon-junction complex (EJC) and is recruited in a splicing- and cap-dependent manner to a region near the 5' end of the mRNA where it functions in mRNA export to the cytoplasm via the TAP/NXF1 pathway. Plays a role in apoptosis negative control involved in brain development. The protein is THO complex subunit 6 homolog (Thoc6) of Rattus norvegicus (Rat).